The primary structure comprises 886 residues: DNA mismatch repair protein MutS (886 aa).

641–648 (GPNMAGKS) serves as a coordination point for ATP.

Belongs to the DNA mismatch repair MutS family.

In terms of biological role, this protein is involved in the repair of mismatches in DNA. It is possible that it carries out the mismatch recognition step. This protein has a weak ATPase activity. In Rickettsia akari (strain Hartford), this protein is DNA mismatch repair protein MutS.